The primary structure comprises 100 residues: Probable DNA-binding protein HU (100 aa).

It belongs to the bacterial histone-like protein family.

Functionally, histone-like DNA-binding protein which is capable of wrapping DNA to stabilize it, and thus to prevent its denaturation under extreme environmental conditions. This Chlamydia pneumoniae (Chlamydophila pneumoniae) protein is Probable DNA-binding protein HU (hup).